The chain runs to 151 residues: MYLAVEIGTVDLNPVLKGAVATILYFAVGMAVLLVGFYAVDLLTPGKLRQLVFIDRRPNAVVVAGAMYIALTVVIITAIANSYSQLGQGLVGVAVYGLMGVILLGVALLAMHLLIPGSFHEHVEEPQLHPGSFAVALILLAVGGVTAAAVS.

4 helical membrane-spanning segments follow: residues 20–40 (VATI…FYAV), 60–80 (AVVV…TAIA), 90–110 (LVGV…ALLA), and 130–150 (PGSF…AAAV).

Belongs to the UPF0719 family.

The protein resides in the cell membrane. The sequence is that of UPF0719 transmembrane protein MAP_1032c from Mycolicibacterium paratuberculosis (strain ATCC BAA-968 / K-10) (Mycobacterium paratuberculosis).